The primary structure comprises 250 residues: 3-deoxy-manno-octulosonate cytidylyltransferase (250 aa).

It belongs to the KdsB family.

Its subcellular location is the cytoplasm. The enzyme catalyses 3-deoxy-alpha-D-manno-oct-2-ulosonate + CTP = CMP-3-deoxy-beta-D-manno-octulosonate + diphosphate. It functions in the pathway nucleotide-sugar biosynthesis; CMP-3-deoxy-D-manno-octulosonate biosynthesis; CMP-3-deoxy-D-manno-octulosonate from 3-deoxy-D-manno-octulosonate and CTP: step 1/1. Its pathway is bacterial outer membrane biogenesis; lipopolysaccharide biosynthesis. In terms of biological role, activates KDO (a required 8-carbon sugar) for incorporation into bacterial lipopolysaccharide in Gram-negative bacteria. In Yersinia enterocolitica serotype O:8 / biotype 1B (strain NCTC 13174 / 8081), this protein is 3-deoxy-manno-octulosonate cytidylyltransferase.